Consider the following 371-residue polypeptide: Probable F-box protein At1g65740 (371 aa).

The F-box domain occupies 2–49 (VDWSTLPEELLHFIAARSFSLVEYKRFSSICVSWHSSVSGVKKNPFHR).

This is Probable F-box protein At1g65740 from Arabidopsis thaliana (Mouse-ear cress).